The chain runs to 374 residues: Histidinol-phosphate aminotransferase 1 (374 aa).

K232 bears the N6-(pyridoxal phosphate)lysine mark.

The protein belongs to the class-II pyridoxal-phosphate-dependent aminotransferase family. Histidinol-phosphate aminotransferase subfamily. Homodimer. Pyridoxal 5'-phosphate serves as cofactor.

The enzyme catalyses L-histidinol phosphate + 2-oxoglutarate = 3-(imidazol-4-yl)-2-oxopropyl phosphate + L-glutamate. Its pathway is amino-acid biosynthesis; L-histidine biosynthesis; L-histidine from 5-phospho-alpha-D-ribose 1-diphosphate: step 7/9. In Ralstonia nicotianae (strain ATCC BAA-1114 / GMI1000) (Ralstonia solanacearum), this protein is Histidinol-phosphate aminotransferase 1 (hisC1).